We begin with the raw amino-acid sequence, 310 residues long: MDKENHSVVTEFVFMGITQDPQLQIIFFVVFLLVYLVNVIGNVGMIILIITDSQLHTPMYFFLCNLSFVDLGYSSAIAPRMLADFLTKHKVISFSSCATQFAFFVGFVDAECYVLAAMAYDRFVAICRPLHYSTLMSKKVCLVLMLGSYFAGLVSLVAHTSLTFSLSYCGSNIINHFFCEIPPLLALSCSDTYISEILLFSLCGFIEFSTILIIFISYAFILIAIIRIRSAEGRLKAFSTCGSHLTGVTLFYGTVMFMYLRPTSSYSLDQDKWASVFYTIIIPMLNPLIYSLRNKDVKAAFKKLIGKKPQ.

The Extracellular segment spans residues 1 to 25 (MDKENHSVVTEFVFMGITQDPQLQI). Asn5 carries N-linked (GlcNAc...) asparagine glycosylation. A helical membrane pass occupies residues 26–46 (IFFVVFLLVYLVNVIGNVGMI). Over 47–54 (ILIITDSQ) the chain is Cytoplasmic. Residues 55-75 (LHTPMYFFLCNLSFVDLGYSS) form a helical membrane-spanning segment. Over 76-99 (AIAPRMLADFLTKHKVISFSSCAT) the chain is Extracellular. Cysteines 97 and 189 form a disulfide. Residues 100–120 (QFAFFVGFVDAECYVLAAMAY) traverse the membrane as a helical segment. At 121–133 (DRFVAICRPLHYS) the chain is on the cytoplasmic side. A helical transmembrane segment spans residues 134 to 154 (TLMSKKVCLVLMLGSYFAGLV). Over 155-196 (SLVAHTSLTFSLSYCGSNIINHFFCEIPPLLALSCSDTYISE) the chain is Extracellular. The chain crosses the membrane as a helical span at residues 197–217 (ILLFSLCGFIEFSTILIIFIS). Cys203 contacts Cu cation. At 218 to 237 (YAFILIAIIRIRSAEGRLKA) the chain is on the cytoplasmic side. Residues 238–258 (FSTCGSHLTGVTLFYGTVMFM) form a helical membrane-spanning segment. The Cu cation site is built by Met256 and Arg261. Residues 259–271 (YLRPTSSYSLDQD) are Extracellular-facing. A helical membrane pass occupies residues 272–292 (KWASVFYTIIIPMLNPLIYSL). Residues 293-310 (RNKDVKAAFKKLIGKKPQ) lie on the Cytoplasmic side of the membrane.

The protein belongs to the G-protein coupled receptor 1 family.

The protein resides in the cell membrane. Its activity is regulated as follows. Copper binding enhances receptor activity in response to odorant binding. Olfactory receptor that is activated by the binding of organosulfur odorants with thioether groups such as (methylthio)methanethiol (MTMT). The activity of this receptor is mediated by G proteins which activate adenylyl cyclase. The polypeptide is Olfactory receptor 5AR1 (Mus musculus (Mouse)).